Reading from the N-terminus, the 325-residue chain is Homocysteine S-methyltransferase 2 (325 aa).

Residues Leu6–Val321 enclose the Hcy-binding domain. Phosphothreonine is present on Thr138. The Zn(2+) site is built by Cys239, Cys306, and Cys307.

It depends on Zn(2+) as a cofactor.

It localises to the cytoplasm. It is found in the nucleus. It carries out the reaction S-methyl-L-methionine + L-homocysteine = 2 L-methionine + H(+). Functionally, homocysteine S-methyltransferase involved in the conversion of S-adenosylmethionine (AdoMet) to methionine to control the methionine/AdoMet ratio. Also converts S-methylmethionine (SMM) to methionine. The sequence is that of Homocysteine S-methyltransferase 2 (SAM4) from Saccharomyces cerevisiae (strain ATCC 204508 / S288c) (Baker's yeast).